The sequence spans 177 residues: Large ribosomal subunit protein uL6 (177 aa).

This sequence belongs to the universal ribosomal protein uL6 family. Part of the 50S ribosomal subunit.

In terms of biological role, this protein binds to the 23S rRNA, and is important in its secondary structure. It is located near the subunit interface in the base of the L7/L12 stalk, and near the tRNA binding site of the peptidyltransferase center. This Delftia acidovorans (strain DSM 14801 / SPH-1) protein is Large ribosomal subunit protein uL6.